A 355-amino-acid polypeptide reads, in one-letter code: Alkanal monooxygenase alpha chain (355 aa).

This sequence belongs to the bacterial luciferase oxidoreductase family. As to quaternary structure, heterodimer of an alpha and a beta chain.

The catalysed reaction is a long-chain fatty aldehyde + FMNH2 + O2 = a long-chain fatty acid + hnu + FMN + H2O + 2 H(+). Light-emitting reaction in luminous bacteria. This Vibrio harveyi (Beneckea harveyi) protein is Alkanal monooxygenase alpha chain (luxA).